The following is a 487-amino-acid chain: b(0,+)-type amino acid transporter 1 (487 aa).

Residues 1–20 form a disordered region; that stretch reads MEETSLRRRREDEKSTHSTE. The Cytoplasmic segment spans residues 1 to 31; that stretch reads MEETSLRRRREDEKSTHSTELKTTSLQKEVG. Position 18 is a phosphoserine (serine 18). The helical transmembrane segment at 32 to 55 threads the bilayer; the sequence is LLSGICIIVGTIIGSGIFISPKSV. 43–47 contacts L-arginine; the sequence is IIGSG. Over 56-62 the chain is Extracellular; it reads LANTESV. The chain crosses the membrane as a helical span at residues 63 to 84; it reads GPCLIIWAACGILATLGALCFA. The Cytoplasmic portion of the chain corresponds to 85–110; that stretch reads ELGTMITKSGGEYPYLMEAFGPIPAY. The helical transmembrane segment at 111–137 threads the bilayer; that stretch reads LFSWTSLIVMKPSSFAIICLSFSEYVC. Over 138–147 the chain is Extracellular; sequence AAFYSGCKPP. 2 helical membrane-spanning segments follow: residues 148–169 and 170–193; these read AVVVKLLAAAAILFITTVNALS and VRLGSYVQNVFTAAKMVIVAIIII. At 194-217 the chain is on the extracellular side; that stretch reads SGLVFLAQGNVKNFQNSFEGTQTS. The helical transmembrane segment at 218–238 threads the bilayer; the sequence is VGAISLAFYNGLWAYDGWNQL. Aspartate 233 contributes to the L-arginine binding site. At 239-251 the chain is on the cytoplasmic side; the sequence is NYITEELRNPYRN. The helical transmembrane segment at 252–274 threads the bilayer; the sequence is LPMAIVIGIPLVTVCYILMNIAY. Topologically, residues 275 to 302 are extracellular; the sequence is FTVMTPTELLQSQAVAVTFGDRVLYPAS. Residues 303-325 form a helical membrane-spanning segment; it reads WVVPLFVAFSTIGAANGTCFTAG. Over 326–351 the chain is Cytoplasmic; it reads RLIYVAGREGHMLKVLSYISVKRLTP. The next 2 helical transmembrane spans lie at 352–370 and 371–391; these read APALIFYGIIAIIYIIPGD and INSLVNYFSFAAWLFYGMTIL. At 392 to 410 the chain is on the cytoplasmic side; it reads GLVVMRFTRKDLERPIKVP. The chain crosses the membrane as a helical span at residues 411–431; the sequence is LFIPIIVILVSLFLILAPIIS. At 432–434 the chain is on the extracellular side; sequence EPA. The chain crosses the membrane as a helical span at residues 435–450; that stretch reads WEYLYCVLFILSGLIF. At 451–487 the chain is on the cytoplasmic side; sequence YFLFVYYKFGWAQRISRPVTKHLQMLMEVVPPEKDPE.

Belongs to the amino acid-polyamine-organocation (APC) superfamily. In terms of assembly, disulfide-linked heterodimer composed of the catalytic light chain subunit SLC7A9 and the heavy chain subunit SLC3A1. The heterodimer is the minimal functional unit. Assembles in heterotetramers (dimers of heterodimers) and higher order oligomers; the oligomerization is mediated by SLC3A1 likely to prevent degradation and facilitate heteromer trafficking to the plasma membrane. Interacts with CAV1. As to expression, expressed in the brush border membrane in the kidney (at protein level).

The protein localises to the apical cell membrane. It catalyses the reaction L-leucine(out) + L-arginine(in) = L-leucine(in) + L-arginine(out). The catalysed reaction is L-histidine(out) + L-arginine(in) = L-histidine(in) + L-arginine(out). It carries out the reaction L-arginine(in) + L-phenylalanine(out) = L-arginine(out) + L-phenylalanine(in). The enzyme catalyses L-cysteine(out) + L-arginine(in) = L-cysteine(in) + L-arginine(out). It catalyses the reaction L-cystine(out) + L-arginine(in) = L-cystine(in) + L-arginine(out). The catalysed reaction is L-lysine(out) + L-arginine(in) = L-lysine(in) + L-arginine(out). Associates with SLC3A1 to form a functional transporter complex that mediates the electrogenic exchange between cationic amino acids and neutral amino acids, with a stoichiometry of 1:1. Has system b(0,+)-like activity with high affinity for extracellular cationic amino acids and L-cystine and lower affinity for intracellular neutral amino acids. Substrate exchange is driven by high concentration of intracellular neutral amino acids and the intracellular reduction of L-cystine to L-cysteine. Required for reabsorption of L-cystine and dibasic amino acids across the brush border membrane in renal proximal tubules. The polypeptide is b(0,+)-type amino acid transporter 1 (Slc7a9) (Mus musculus (Mouse)).